A 286-amino-acid chain; its full sequence is Nucleotide-binding protein HAPS_0087 (286 aa).

Position 8–15 (8–15 (GRSGSGKS)) interacts with ATP. GTP is bound at residue 56–59 (DVRN).

Belongs to the RapZ-like family.

Displays ATPase and GTPase activities. The polypeptide is Nucleotide-binding protein HAPS_0087 (Glaesserella parasuis serovar 5 (strain SH0165) (Haemophilus parasuis)).